Here is a 757-residue protein sequence, read N- to C-terminus: Transferrin receptor protein 1 (757 aa).

Topologically, residues 1-67 are cytoplasmic; it reads MMDQARSAIS…KHRRLNGRLC (67 aa). The tract at residues 1 to 67 is mediates interaction with SH3BP4; the sequence is MMDQARSAIS…KHRRLNGRLC (67 aa). Phosphoserine is present on residues Ser-10 and Ser-19. Tyr-20 carries the post-translational modification Phosphotyrosine. Positions 20-23 match the Endocytosis signal motif; sequence YTRF. Thr-21 carries the post-translational modification Phosphothreonine. Ser-24 is subject to Phosphoserine. Residues 58–61 carry the Stop-transfer sequence motif; sequence KHRR. Residue Cys-67 is the site of S-palmitoyl cysteine attachment. The chain crosses the membrane as a helical; Signal-anchor for type II membrane protein span at residues 68–88; that stretch reads FGTIAVVIFFLIGFMIGYLGY. At 89 to 757 the chain is on the extracellular side; that stretch reads CKRTEQKDCV…GDIWDIDNEF (669 aa). O-linked (GalNAc...) threonine glycosylation is present at Thr-103. One can recognise a PA domain in the interval 220-310; it reads SKATTVSGKL…GTGDPYTPGF (91 aa). N-linked (GlcNAc...) asparagine glycosylation is found at Asn-248 and Asn-314. The interval 566 to 757 is ligand-binding; it reads NLDTYEKLIQ…GDIWDIDNEF (192 aa). Residues 643–645 carry the Cell attachment site motif; it reads RGD. Asn-719 and Asn-724 each carry an N-linked (GlcNAc...) asparagine glycan.

The protein belongs to the peptidase M28 family. M28B subfamily. As to quaternary structure, homodimer; disulfide-linked. Binds one transferrin molecule per subunit. Interacts with SH3BP4. Interacts with STEAP3; facilitates TFRC endocytosis in erythroid precursor cells. In terms of processing, stearoylated by ZDHHC6 which inhibits TFRC-mediated activation of the JNK pathway and promotes mitochondrial fragmentation. Stearoylation does not affect iron uptake. Post-translationally, N- and O-glycosylated, phosphorylated and palmitoylated.

Its subcellular location is the cell membrane. It is found in the melanosome. Cellular uptake of iron occurs via receptor-mediated endocytosis of ligand-occupied transferrin receptor into specialized endosomes. Endosomal acidification leads to iron release. The apotransferrin-receptor complex is then recycled to the cell surface with a return to neutral pH and the concomitant loss of affinity of apotransferrin for its receptor. Transferrin receptor is necessary for development of erythrocytes and the nervous system. Positively regulates T and B cell proliferation through iron uptake. Acts as a lipid sensor that regulates mitochondrial fusion by regulating activation of the JNK pathway. When dietary levels of stearate (C18:0) are low, promotes activation of the JNK pathway, resulting in HUWE1-mediated ubiquitination and subsequent degradation of the mitofusin MFN2 and inhibition of mitochondrial fusion. When dietary levels of stearate (C18:0) are high, TFRC stearoylation inhibits activation of the JNK pathway and thus degradation of the mitofusin MFN2. Mediates uptake of NICOL1 into fibroblasts where it may regulate extracellular matrix production. This chain is Transferrin receptor protein 1 (TFRC), found in Cricetulus griseus (Chinese hamster).